The chain runs to 125 residues: MADLKAFAEQLVNLTVKEVSELATILKEEYGIEPAAAAVAVAGPAAGGAAAAAEEKTSFDVVLKAAGANKLAIVKLVKELTGLGLKEAKDMVDSAPSAIKEGIAKADAEAMKKQLEEAGAEVELK.

The protein belongs to the bacterial ribosomal protein bL12 family. Homodimer. Part of the ribosomal stalk of the 50S ribosomal subunit. Forms a multimeric L10(L12)X complex, where L10 forms an elongated spine to which 2 to 4 L12 dimers bind in a sequential fashion. Binds GTP-bound translation factors.

Functionally, forms part of the ribosomal stalk which helps the ribosome interact with GTP-bound translation factors. Is thus essential for accurate translation. This is Large ribosomal subunit protein bL12 from Parabacteroides distasonis (strain ATCC 8503 / DSM 20701 / CIP 104284 / JCM 5825 / NCTC 11152).